The following is a 1733-amino-acid chain: Gag-Pol polyprotein (1733 aa).

Residue glycine 2 is the site of N-myristoyl glycine; by host attachment. The PTAP/PSAP motif motif lies at 109–112 (PSAP). A compositionally biased stretch (pro residues) spans 112–121 (PSLLPEPPLS). Disordered stretches follow at residues 112–196 (PSLL…ASRL) and 202–221 (LPVA…GGNG). Positions 128-132 (LYPAL) match the LYPX(n)L motif motif. Residues 159-170 (DPPPYRDPGPPP) are compositionally biased toward pro residues. The short motif at 160–163 (PPPY) is the PPXY motif element. A Phosphoserine; by host modification is found at serine 190. The segment at 343-391 (GRSPTNLAKVKGITQGPNESPSAFLERLKEAYRRYTPYDPEDPGQETNV) is interaction with host PIAS4. The tract at residues 428 to 433 (IFNKRE) is interaction with host UBE2I. Composition is skewed to basic and acidic residues over residues 432 to 464 (RETP…EKER) and 484 to 496 (KQDR…RRPQ). Disordered regions lie at residues 432 to 496 (RETP…RRPQ) and 511 to 550 (WAKD…EPRI). A coiled-coil region spans residues 436–476 (EEREERIKRETEEKEERRRAEDEQKEKERDRRRHREMSKLL). Residues 500–517 (DQCAYCKEKGHWAKDCPK) form a CCHC-type zinc finger. The Peptidase A2 domain occupies 559-629 (VTFLVDTGAQ…CPYPLLGRDL (71 aa)). The Protease; shared with dimeric partner role is filled by aspartate 564. In terms of domain architecture, Reverse transcriptase spans 739–930 (LDQGILVPCQ…KQVKYLGYLL (192 aa)). 7 residues coordinate Mg(2+): aspartate 807, aspartate 881, aspartate 882, aspartate 1181, glutamate 1219, aspartate 1240, and aspartate 1310. One can recognise an RNase H type-1 domain in the interval 1172–1318 (PDADHTWYTD…ADQAAREVAT (147 aa)). The HHCC-type zinc finger occupies 1385–1425 (HQLTHLSFSKTKALLERSPSPYYMLNRDRTLKNITETCKAC). The region spanning 1442–1600 (RGHRPGTHWE…TPYEILYGAP (159 aa)) is the Integrase catalytic domain. Mg(2+) is bound by residues aspartate 1453 and aspartate 1512.

As to quaternary structure, homohexamer; further associates as homomultimer. The virus core is composed of a lattice formed from hexagonal rings, each containing six capsid monomers. Interacts with mouse UBE2I and mouse PIAS4. Interacts (via PPXY motif) with host NEDD4. Interacts (via PSAP motif) with host TSG101. Interacts (via LYPX(n)L motif) with host PDCD6IP. In terms of assembly, the reverse transcriptase is a monomer (Potential). Interacts (via RNase domains) with host release factor ETF1; this interaction is essential for translational readthrough of amber codon between viral gag and pol genes, as well as for viral replication. As to quaternary structure, homodimer. The cofactor is Mg(2+). In terms of processing, ubiquitinated by ITCH. Gag can recruit the ubiquitin ligase Itch in an L domain-independent manner to facilitate virus release via a mechanism that involves Gag ubiquitination. Post-translationally, specific enzymatic cleavages by the viral protease yield mature proteins. The protease is released by autocatalytic cleavage. The polyprotein is cleaved during and after budding, this process is termed maturation. Sumoylated; which is required for virus replication. In terms of processing, phosphorylated on serine residues.

Its subcellular location is the virion. The protein resides in the host cell membrane. It is found in the host late endosome membrane. The protein localises to the host endosome. It localises to the host multivesicular body. Its subcellular location is the host cytoplasm. It catalyses the reaction DNA(n) + a 2'-deoxyribonucleoside 5'-triphosphate = DNA(n+1) + diphosphate. The catalysed reaction is Endonucleolytic cleavage to 5'-phosphomonoester.. With respect to regulation, most efficiently inhibited by Amprenavir, which is able to block Gag-Pol processing in infected cells. In terms of biological role, plays a role in budding and is processed by the viral protease during virion maturation outside the cell. During budding, it recruits, in a PPXY-dependent or independent manner, Nedd4-like ubiquitin ligases that conjugate ubiquitin molecules to Gag-Pol, or to Gag-Pol binding host factors. Interaction with HECT ubiquitin ligases probably links the viral protein to the host ESCRT pathway and facilitates release. Functionally, targets Gag and gag-pol polyproteins to the plasma membrane via a multipartite membrane binding signal, that includes its myristoylated N-terminus. Also mediates nuclear localization of the pre-integration complex. Constituent of the pre-integration complex (PIC) which tethers the latter to mitotic chromosomes. This allows the integration of the viral genome into the host DNA. Its function is as follows. Forms the spherical core of the virion that encapsulates the genomic RNA-nucleocapsid complex. In terms of biological role, involved in the packaging and encapsidation of two copies of the genome. Binds with high affinity to conserved UCUG elements within the packaging signal, located near the 5'-end of the genome. This binding is dependent on genome dimerization. Acts as a nucleic acid chaperone which is involved in rearrangement of nucleic acid secondary structures during gRNA retrotranscription. Functionally, the aspartyl protease mediates proteolytic cleavages of Gag and Gag-Pol polyproteins during or shortly after the release of the virion from the plasma membrane. Cleavages take place as an ordered, step-wise cascade to yield mature proteins. This process is called maturation. Displays maximal activity during the budding process just prior to particle release from the cell (Potential). Cleaves the translation initiation factor eIF4G leading to the inhibition of host cap-dependent translation. RT is a multifunctional enzyme that converts the viral dimeric RNA genome into dsDNA in the cytoplasm, shortly after virus entry into the cell. This enzyme displays a DNA polymerase activity that can copy either DNA or RNA templates, and a ribonuclease H (RNase H) activity that cleaves the RNA strand of RNA-DNA heteroduplexes in a partially processive 3' to 5' endonucleasic mode. Conversion of viral genomic RNA into dsDNA requires many steps. A tRNA binds to the primer-binding site (PBS) situated at the 5' end of the viral RNA. RT uses the 3' end of the tRNA primer to perform a short round of RNA-dependent minus-strand DNA synthesis. The reading proceeds through the U5 region and ends after the repeated (R) region which is present at both ends of viral RNA. The portion of the RNA-DNA heteroduplex is digested by the RNase H, resulting in a ssDNA product attached to the tRNA primer. This ssDNA/tRNA hybridizes with the identical R region situated at the 3' end of viral RNA. This template exchange, known as minus-strand DNA strong stop transfer, can be either intra- or intermolecular. RT uses the 3' end of this newly synthesized short ssDNA to perform the RNA-dependent minus-strand DNA synthesis of the whole template. RNase H digests the RNA template except for a polypurine tract (PPT) situated at the 5' end of the genome. It is not clear if both polymerase and RNase H activities are simultaneous. RNase H probably can proceed both in a polymerase-dependent (RNA cut into small fragments by the same RT performing DNA synthesis) and a polymerase-independent mode (cleavage of remaining RNA fragments by free RTs). Secondly, RT performs DNA-directed plus-strand DNA synthesis using the PPT that has not been removed by RNase H as primers. PPT and tRNA primers are then removed by RNase H. The 3' and 5' ssDNA PBS regions hybridize to form a circular dsDNA intermediate. Strand displacement synthesis by RT to the PBS and PPT ends produces a blunt ended, linear dsDNA copy of the viral genome that includes long terminal repeats (LTRs) at both ends. Its function is as follows. Catalyzes viral DNA integration into the host chromosome, by performing a series of DNA cutting and joining reactions. This enzyme activity takes place after virion entry into a cell and reverse transcription of the RNA genome in dsDNA. The first step in the integration process is 3' processing. This step requires a complex comprising the viral genome, matrix protein and integrase. This complex is called the pre-integration complex (PIC). The integrase protein removes 2 nucleotides from each 3' end of the viral DNA, leaving recessed CA OH's at the 3' ends. In the second step that requires cell division, the PIC enters cell nucleus. In the third step, termed strand transfer, the integrase protein joins the previously processed 3' ends to the 5' ends of strands of target cellular DNA at the site of integration. The last step is viral DNA integration into host chromosome. This is Gag-Pol polyprotein (gag-pol) from Cas-Br-E murine leukemia virus.